The following is a 183-amino-acid chain: Cyanate hydratase (183 aa).

Residues Arg-118, Glu-121, and Ser-144 contribute to the active site.

Belongs to the cyanase family.

It carries out the reaction cyanate + hydrogencarbonate + 3 H(+) = NH4(+) + 2 CO2. Catalyzes the reaction of cyanate with bicarbonate to produce ammonia and carbon dioxide. The chain is Cyanate hydratase from Cryptococcus neoformans var. neoformans serotype D (strain B-3501A) (Filobasidiella neoformans).